We begin with the raw amino-acid sequence, 1133 residues long: Fas-binding factor 1 (1133 aa).

Disordered regions lie at residues 89-198 (LGLK…TPIR) and 211-544 (IMAT…VPVQ). The segment covering 102 to 113 (AAKDPGKGELPN) has biased composition (basic and acidic residues). Positions 125–134 (KKSLPSPSSS) are enriched in low complexity. Residue Ser142 is modified to Phosphoserine. The segment covering 165–182 (PPVTQSKTASDKSPSTVR) has biased composition (polar residues). Basic and acidic residues-rich tracts occupy residues 221–245 (PKAEKRQIGDQEGPRPARSTLDELL) and 259–276 (TGEHREFKLDKKYQRPQD). Residues 277-286 (SEDMWGDEDF) show a composition bias toward acidic residues. The span at 295 to 310 (VVSSEGRQSRRQSVSR) shows a compositional bias: low complexity. A compositionally biased stretch (polar residues) spans 325-336 (SKQSPPMASSPI). Residues 415-424 (ASKEEKEDWL) show a composition bias toward basic and acidic residues. Residues 459 to 469 (SGSQPLTSTQG) show a composition bias toward polar residues. The span at 473–482 (AAAGGSSGTT) shows a compositional bias: low complexity. Coiled-coil stretches lie at residues 577–727 (AELQ…VDAA) and 773–870 (IRQR…EEQK). Residue Lys960 forms a Glycyl lysine isopeptide (Lys-Gly) (interchain with G-Cter in SUMO2) linkage. The disordered stretch occupies residues 1062 to 1085 (AASSQSALMPPAPTTRWCSQPPTG).

May interact with FAS cytoplasmic domain. Interacts with PARD3. Interacts with TRAPPC14. As to expression, present in various epithelial cells (at protein level).

The protein resides in the cytoplasm. It is found in the cytoskeleton. It localises to the microtubule organizing center. Its subcellular location is the centrosome. The protein localises to the centriole. The protein resides in the spindle pole. It is found in the cell junction. In terms of biological role, keratin-binding protein required for epithelial cell polarization. Involved in apical junction complex (AJC) assembly via its interaction with PARD3. Required for ciliogenesis. The polypeptide is Fas-binding factor 1 (FBF1) (Homo sapiens (Human)).